The following is a 286-amino-acid chain: Diaminopimelate epimerase (286 aa).

The substrate site is built by N12 and N67. Residue C76 is the Proton donor of the active site. Substrate is bound by residues G77–N78, N165, N198, and E216–R217. C225 acts as the Proton acceptor in catalysis. Residue G226–T227 participates in substrate binding.

The protein belongs to the diaminopimelate epimerase family. Homodimer.

It localises to the cytoplasm. It carries out the reaction (2S,6S)-2,6-diaminopimelate = meso-2,6-diaminopimelate. It functions in the pathway amino-acid biosynthesis; L-lysine biosynthesis via DAP pathway; DL-2,6-diaminopimelate from LL-2,6-diaminopimelate: step 1/1. Catalyzes the stereoinversion of LL-2,6-diaminopimelate (L,L-DAP) to meso-diaminopimelate (meso-DAP), a precursor of L-lysine. This chain is Diaminopimelate epimerase, found in Methanothermobacter thermautotrophicus (strain ATCC 29096 / DSM 1053 / JCM 10044 / NBRC 100330 / Delta H) (Methanobacterium thermoautotrophicum).